Reading from the N-terminus, the 260-residue chain is LIM and SH3 domain protein 1 (260 aa).

Met1 is subject to N-acetylmethionine. The LIM zinc-binding domain maps to 5-56; that stretch reads CARCCKIVYPTEKVNCLDKFWHKACFHCETCKMTLNMKNYKGYEKKPYCNAH. At Lys42 the chain carries N6-acetyllysine. 2 Nebulin repeats span residues 61-95 and 97-131; these read SFTMVADTPENLRLKQQSELQSQVRYKEEFEKNKG and GFSVVADTPELQRIKKTQDQISNIKYHEEFEKSRM. Thr68 carries the phosphothreonine modification. Lys75 is modified (N6-methyllysine). Ser99 is subject to Phosphoserine. The residue at position 104 (Thr104) is a Phosphothreonine. Lys112 is modified (N6-succinyllysine). 2 positions are modified to phosphoserine: Ser118 and Ser134. Positions 123-204 are disordered; the sequence is HEEFEKSRMG…QRSAPGGGGK (82 aa). The span at 140 to 155 shows a compositional bias: basic and acidic residues; sequence ECERRDPQESSYRRPQ. Positions 171-180 are enriched in low complexity; it reads QQPQQQPAAQ. In terms of domain architecture, SH3 spans 201 to 260; that stretch reads GGGKRYRAVYDYSAADEDEVSFQDGDTIVNVQQIDDGWMYGTVERTGDTGMLPANYVEAI.

In terms of assembly, interacts with F-actin. Interacts with ANKRD54. Interacts with KBTBD10. Phosphorylated.

The protein resides in the cytoplasm. It localises to the cell cortex. Its subcellular location is the cytoskeleton. Plays an important role in the regulation of dynamic actin-based, cytoskeletal activities. Agonist-dependent changes in LASP1 phosphorylation may also serve to regulate actin-associated ion transport activities, not only in the parietal cell but also in certain other F-actin-rich secretory epithelial cell types. The polypeptide is LIM and SH3 domain protein 1 (LASP1) (Bos taurus (Bovine)).